We begin with the raw amino-acid sequence, 95 residues long: DNA-directed RNA polymerase subunit Rpo11 (95 aa).

Belongs to the archaeal Rpo11/eukaryotic RPB11/RPC19 RNA polymerase subunit family. As to quaternary structure, part of the RNA polymerase complex.

It is found in the cytoplasm. It carries out the reaction RNA(n) + a ribonucleoside 5'-triphosphate = RNA(n+1) + diphosphate. Functionally, DNA-dependent RNA polymerase (RNAP) catalyzes the transcription of DNA into RNA using the four ribonucleoside triphosphates as substrates. The sequence is that of DNA-directed RNA polymerase subunit Rpo11 from Pyrococcus horikoshii (strain ATCC 700860 / DSM 12428 / JCM 9974 / NBRC 100139 / OT-3).